Consider the following 298-residue polypeptide: HTH-type transcriptional regulator ArgP (298 aa).

The HTH lysR-type domain occupies 4–60 (LDYRWIEALDSVVSKGSFERAAEQLFISQSAVSQRIKQLEKYLAQPVLIREQPPRPT). The H-T-H motif DNA-binding region spans 21–40 (FERAAEQLFISQSAVSQRIK).

The protein belongs to the LysR transcriptional regulatory family. As to quaternary structure, homodimer.

Functionally, controls the transcription of genes involved in arginine and lysine metabolism. The sequence is that of HTH-type transcriptional regulator ArgP from Vibrio cholerae serotype O1 (strain ATCC 39315 / El Tor Inaba N16961).